A 241-amino-acid polypeptide reads, in one-letter code: Phosphoadenosine 5'-phosphosulfate reductase (241 aa).

C235 (nucleophile; cysteine thiosulfonate intermediate) is an active-site residue.

This sequence belongs to the PAPS reductase family. CysH subfamily.

The protein localises to the cytoplasm. The catalysed reaction is [thioredoxin]-disulfide + sulfite + adenosine 3',5'-bisphosphate + 2 H(+) = [thioredoxin]-dithiol + 3'-phosphoadenylyl sulfate. The protein operates within sulfur metabolism; hydrogen sulfide biosynthesis; sulfite from sulfate: step 3/3. In terms of biological role, catalyzes the formation of sulfite from phosphoadenosine 5'-phosphosulfate (PAPS) using thioredoxin as an electron donor. The protein is Phosphoadenosine 5'-phosphosulfate reductase of Xanthomonas oryzae pv. oryzae (strain MAFF 311018).